Here is a 214-residue protein sequence, read N- to C-terminus: Transcriptional activator protein ExaE (214 aa).

One can recognise a Response regulatory domain in the interval 2–118 (GILLVDDHPM…VVLEAVRRVL (117 aa)). D53 bears the 4-aspartylphosphate mark. The 66-residue stretch at 143–208 (GNARLQGLTQ…ELVHLAIEAG (66 aa)) folds into the HTH luxR-type domain. A DNA-binding region (H-T-H motif) is located at residues 167 to 186 (TRLIAQQLCISAKTVSNYLT).

In terms of biological role, positive regulator of the expression of the gene qedA and the activity of ADH I but does not affect the activities of ADH IIB or ADH IIG. The sequence is that of Transcriptional activator protein ExaE from Pseudomonas putida (Arthrobacter siderocapsulatus).